We begin with the raw amino-acid sequence, 396 residues long: Acetate kinase (396 aa).

Mg(2+) is bound at residue asparagine 8. Lysine 15 lines the ATP pocket. Residue arginine 89 coordinates substrate. Catalysis depends on aspartate 146, which acts as the Proton donor/acceptor. ATP is bound by residues 206–210 (HLGNG), 280–282 (DMR), and 328–332 (GVGEN). Glutamate 382 contributes to the Mg(2+) binding site.

It belongs to the acetokinase family. Homodimer. It depends on Mg(2+) as a cofactor. Requires Mn(2+) as cofactor.

The protein resides in the cytoplasm. The enzyme catalyses acetate + ATP = acetyl phosphate + ADP. Its pathway is metabolic intermediate biosynthesis; acetyl-CoA biosynthesis; acetyl-CoA from acetate: step 1/2. Catalyzes the formation of acetyl phosphate from acetate and ATP. Can also catalyze the reverse reaction. The chain is Acetate kinase from Clavibacter sepedonicus (Clavibacter michiganensis subsp. sepedonicus).